The primary structure comprises 122 residues: Large ribosomal subunit protein uL22 (122 aa).

The protein belongs to the universal ribosomal protein uL22 family. Part of the 50S ribosomal subunit.

This protein binds specifically to 23S rRNA; its binding is stimulated by other ribosomal proteins, e.g. L4, L17, and L20. It is important during the early stages of 50S assembly. It makes multiple contacts with different domains of the 23S rRNA in the assembled 50S subunit and ribosome. Its function is as follows. The globular domain of the protein is located near the polypeptide exit tunnel on the outside of the subunit, while an extended beta-hairpin is found that lines the wall of the exit tunnel in the center of the 70S ribosome. This Thermosynechococcus vestitus (strain NIES-2133 / IAM M-273 / BP-1) protein is Large ribosomal subunit protein uL22.